The following is a 498-amino-acid chain: ATP synthase subunit beta, chloroplastic (498 aa).

172–179 (GGAGVGKT) lines the ATP pocket.

This sequence belongs to the ATPase alpha/beta chains family. As to quaternary structure, F-type ATPases have 2 components, CF(1) - the catalytic core - and CF(0) - the membrane proton channel. CF(1) has five subunits: alpha(3), beta(3), gamma(1), delta(1), epsilon(1). CF(0) has four main subunits: a(1), b(1), b'(1) and c(9-12).

The protein localises to the plastid. It localises to the chloroplast thylakoid membrane. The catalysed reaction is ATP + H2O + 4 H(+)(in) = ADP + phosphate + 5 H(+)(out). Functionally, produces ATP from ADP in the presence of a proton gradient across the membrane. The catalytic sites are hosted primarily by the beta subunits. The protein is ATP synthase subunit beta, chloroplastic of Populus alba (White poplar).